A 509-amino-acid polypeptide reads, in one-letter code: Activin receptor type-1 (509 aa).

Residues 1–20 form the signal peptide; that stretch reads MVDGVMILPVLIMIALPSPS. The Extracellular segment spans residues 21–123; the sequence is MEDEKPKVNP…FPGTQNFHLE (103 aa). The N-linked (GlcNAc...) asparagine glycan is linked to asparagine 102. A helical transmembrane segment spans residues 124–146; the sequence is VGLIILSVVFAVCLLACLLGVAL. The Cytoplasmic segment spans residues 147–509; the sequence is RKFKRRNQER…NSLDKLKTDC (363 aa). Residues 178-207 form the GS domain; it reads STLADLLDHSCTSGSGSGLPFLVQRTVARQ. Residues 208–502 enclose the Protein kinase domain; the sequence is ITLLECVGKG…KTLTKIDNSL (295 aa). Residues 214–222 and lysine 235 each bind ATP; that span reads VGKGRYGEV. Aspartate 336 (proton acceptor) is an active-site residue. Phosphoserine is present on serine 501.

This sequence belongs to the protein kinase superfamily. TKL Ser/Thr protein kinase family. TGFB receptor subfamily. As to quaternary structure, interacts with FKBP1A. Interacts with FCHO1. Interacts with CLU. Interacts with type II receptors AMHR2 and ACVR2A. Interacts with BMP7. Interacts with GDF2/BMP9. Interacts with BMP6 (when glycosylated); the interaction may induce HAMP expression. Interacts with TSC22D1/TSC-22. Mg(2+) serves as cofactor. Requires Mn(2+) as cofactor. Expressed in normal parenchymal cells, endothelial cells, fibroblasts and tumor-derived epithelial cells.

Its subcellular location is the membrane. The catalysed reaction is L-threonyl-[receptor-protein] + ATP = O-phospho-L-threonyl-[receptor-protein] + ADP + H(+). The enzyme catalyses L-seryl-[receptor-protein] + ATP = O-phospho-L-seryl-[receptor-protein] + ADP + H(+). Functionally, bone morphogenetic protein (BMP) type I receptor that is involved in a wide variety of biological processes, including bone, heart, cartilage, nervous, and reproductive system development and regulation. As a type I receptor, forms heterotetrameric receptor complexes with the type II receptors AMHR2, ACVR2A or ACVR2B. Upon binding of ligands such as BMP7 or GDF2/BMP9 to the heteromeric complexes, type II receptors transphosphorylate ACVR1 intracellular domain. In turn, ACVR1 kinase domain is activated and subsequently phosphorylates SMAD1/5/8 proteins that transduce the signal. In addition to its role in mediating BMP pathway-specific signaling, suppresses TGFbeta/activin pathway signaling by interfering with the binding of activin to its type II receptor. Besides canonical SMAD signaling, can activate non-canonical pathways such as p38 mitogen-activated protein kinases/MAPKs. May promote the expression of HAMP, potentially via its interaction with BMP6. This Homo sapiens (Human) protein is Activin receptor type-1 (ACVR1).